A 637-amino-acid chain; its full sequence is 1-deoxy-D-xylulose-5-phosphate synthase (637 aa).

Thiamine diphosphate-binding positions include H72 and 113–115; that span reads GHA. D144 contacts Mg(2+). Residues 145 to 146, N174, Y287, and E370 each bind thiamine diphosphate; that span reads GA. N174 contributes to the Mg(2+) binding site.

It belongs to the transketolase family. DXPS subfamily. Homodimer. It depends on Mg(2+) as a cofactor. The cofactor is thiamine diphosphate.

It carries out the reaction D-glyceraldehyde 3-phosphate + pyruvate + H(+) = 1-deoxy-D-xylulose 5-phosphate + CO2. It functions in the pathway metabolic intermediate biosynthesis; 1-deoxy-D-xylulose 5-phosphate biosynthesis; 1-deoxy-D-xylulose 5-phosphate from D-glyceraldehyde 3-phosphate and pyruvate: step 1/1. Catalyzes the acyloin condensation reaction between C atoms 2 and 3 of pyruvate and glyceraldehyde 3-phosphate to yield 1-deoxy-D-xylulose-5-phosphate (DXP). This is 1-deoxy-D-xylulose-5-phosphate synthase from Prochlorococcus marinus subsp. pastoris (strain CCMP1986 / NIES-2087 / MED4).